The sequence spans 132 residues: Small ribosomal subunit protein uS8 (132 aa).

It belongs to the universal ribosomal protein uS8 family. Part of the 30S ribosomal subunit. Contacts proteins S5 and S12.

In terms of biological role, one of the primary rRNA binding proteins, it binds directly to 16S rRNA central domain where it helps coordinate assembly of the platform of the 30S subunit. In Caulobacter sp. (strain K31), this protein is Small ribosomal subunit protein uS8.